Consider the following 901-residue polypeptide: Modifier of cell death (901 aa).

Disordered stretches follow at residues 147-169 and 218-245; these read AQKRGRFPPQARSSLSPQKPRAA and PRKSAPWQEETAANGGPQSTSLIRSPSP. The C2H2-type zinc finger occupies 259 to 282; sequence FKCAECGDGFPVMDRLCDHMIKQH. Disordered stretches follow at residues 494–528, 682–717, and 779–901; these read KKEHMDYDEPDPNIPSTSAQALGYNPDDDEGDDVP, QERVHQPERRPRRSAAPASPAKPQYRPQPPARSHEE, and HKAI…WDDN. The span at 817–828 shows a compositional bias: low complexity; sequence EAAAKLIQAENE. Over residues 829-840 the composition is skewed to acidic residues; sequence MVVEEEEVEEPP. Residues 846 to 866 are compositionally biased toward basic and acidic residues; it reads QVPKEKEVEVAEAEKLPEQVK.

Functionally, promotes programmed cell death. Its role in programmed cell death may be in conjunction with cell cycle regulatory factor efl-1 and the synthetic multivulva class B proteins dpl-1 and lin-35, and is independent of the ced-1, ced-8 and ced-9 pathways. In Caenorhabditis elegans, this protein is Modifier of cell death.